The following is a 348-amino-acid chain: S-adenosylmethionine-dependent nucleotide dehydratase RSAD2 (348 aa).

A Radical SAM core domain is found at 56 to 276; the sequence is SATPSSVNYH…LERHSSISCL (221 aa). [4Fe-4S] cluster-binding residues include Cys70, Cys74, and Cys77.

This sequence belongs to the radical SAM superfamily. RSAD2 family. The cofactor is [4Fe-4S] cluster. In terms of tissue distribution, expressed at low levels in spleen and head kidney.

The protein localises to the endoplasmic reticulum membrane. Interferon-inducible iron-sulfur (4FE-4S) cluster-binding antiviral protein which plays a major role in the cell antiviral state induced by type I and type II interferon. This chain is S-adenosylmethionine-dependent nucleotide dehydratase RSAD2, found in Oncorhynchus mykiss (Rainbow trout).